A 59-amino-acid chain; its full sequence is DNA gyrase inhibitor YacG (59 aa).

Cysteine 9, cysteine 12, cysteine 27, and cysteine 31 together coordinate Zn(2+).

The protein belongs to the DNA gyrase inhibitor YacG family. Interacts with GyrB. The cofactor is Zn(2+).

Functionally, inhibits all the catalytic activities of DNA gyrase by preventing its interaction with DNA. Acts by binding directly to the C-terminal domain of GyrB, which probably disrupts DNA binding by the gyrase. The protein is DNA gyrase inhibitor YacG of Geotalea daltonii (strain DSM 22248 / JCM 15807 / FRC-32) (Geobacter daltonii).